The sequence spans 965 residues: Fibronectin-binding protein A (965 aa).

The signal sequence occupies residues 1-36; sequence MKNNLRYGIRKHKLGAASVFLGTMIVIGMGQDKEAA. The short motif at 7 to 18 is the YSIRK-G/S signaling motif element; it reads YGIRKHKLGAAS. A disordered region spans residues 37 to 206; it reads ASEQKTTTVE…VTSKVTVEDE (170 aa). The segment at 37–514 is ligand-binding A region; the sequence is ASEQKTTTVE…SNKANGDGKY (478 aa). Over residues 39-55 the composition is skewed to polar residues; sequence EQKTTTVEENGNSATDN. The segment covering 59 to 74 has biased composition (low complexity); sequence ETQTTTTNVNTIDETQ. Residues 75-92 show a composition bias toward polar residues; sequence SYSATATEQPSNATQVTT. Basic and acidic residues predominate over residues 112 to 122; the sequence is TVKEEVVKEEA. A compositionally biased stretch (polar residues) spans 126 to 139; it reads VKETTQSQDNSGDQ. Positions 179–193 are enriched in basic and acidic residues; that stretch reads DVAEAKEASDAKVET. Positions 194–514 are fibrinogen/elastin/tropoelastin-binding; that stretch reads GTDVTSKVTV…SNKANGDGKY (321 aa). The interval 515 to 837 is fibronectin-binding; that stretch reads GPIVDSNNFE…EGQQTIEEDT (323 aa). Residues 548–577 form a B-1 repeat; sequence ENQDNTPLDIDYHTAIDGEGGYVDGYIETI. A 2 X approximate tandem repeats region spans residues 548–607; it reads ENQDNTPLDIDYHTAIDGEGGYVDGYIETIEETDSSAIDIDYHTAVDSEAGHVGGYTESS. One copy of the B-2 repeat lies at 578-607; that stretch reads EETDSSAIDIDYHTAVDSEAGHVGGYTESS. Disordered stretches follow at residues 598-625, 743-774, 794-903, and 916-942; these read GHVG…NSKH, LGYE…GNII, IEED…GKVV, and VAPT…NKGM. Residues 748-770 form a D-1; truncated repeat; the sequence is GQNSGNQSFEEDTEEDKPKYEQG. The 4 X approximate tandem repeats stretch occupies residues 748–839; it reads GQNSGNQSFE…QQTIEEDTTP (92 aa). One copy of the D-2; truncated repeat lies at 771–785; it reads GNIIDIDFDSVPQIH. Residues 786-824 form a D-3 repeat; that stretch reads GFNKHNEIIEEDTNKDKPNYQFGGHNSVDFEEDTLPKVS. A compositionally biased stretch (basic and acidic residues) spans 794–803; that stretch reads IEEDTNKDKP. A D-4; truncated repeat occupies 825 to 839; that stretch reads GQNEGQQTIEEDTTP. A compositionally biased stretch (pro residues) spans 839–885; sequence PPTPPTPEVPSEPGTPTPPTPEVPSEPGKPTPPTPEVPAEPGKPVPP. WR repeat units follow at residues 840-853, 854-867, 868-881, and 882-895; these read PTPP…EPGT, PTPP…EPGK, and PVPP…KPSK. Positions 840 to 895 are 4 X tandem repeats, Pro-rich (WR); the sequence is PTPPTPEVPSEPGTPTPPTPEVPSEPGKPTPPTPEVPAEPGKPVPPAKEEPKKPSK. An LPXTG sorting signal motif is present at residues 929–933; it reads LPETG. Pentaglycyl murein peptidoglycan amidated threonine is present on T932. A propeptide spans 933 to 965 (removed by sortase); that stretch reads GGEESTNKGMLFGGLFSILGLALLRRNKKNHKA.

The protein localises to the secreted. The protein resides in the cell wall. In terms of biological role, promotes bacterial attachment to multiple substrates, such as fibronectin (Fn), fibrinogen (Fg), elastin peptides and tropoelastin. This confers to S.aureus the ability to invade endothelial cells. Promotes adherence to and aggregation of activated platelets. The polypeptide is Fibronectin-binding protein A (fnbA) (Staphylococcus aureus (strain MRSA252)).